Reading from the N-terminus, the 569-residue chain is Urease subunit alpha (569 aa).

The region spanning 131-569 (GGMDAHIHFI…LPMAQRYFLF (439 aa)) is the Urease domain. Ni(2+)-binding residues include His-136, His-138, and Lys-218. At Lys-218 the chain carries N6-carboxylysine. Substrate is bound at residue His-220. Positions 247 and 273 each coordinate Ni(2+). His-321 (proton donor) is an active-site residue. Asp-361 is a Ni(2+) binding site.

The protein belongs to the metallo-dependent hydrolases superfamily. Urease alpha subunit family. Heterotrimer of UreA (gamma), UreB (beta) and UreC (alpha) subunits. Three heterotrimers associate to form the active enzyme. It depends on Ni cation as a cofactor. In terms of processing, carboxylation allows a single lysine to coordinate two nickel ions.

The protein resides in the cytoplasm. The enzyme catalyses urea + 2 H2O + H(+) = hydrogencarbonate + 2 NH4(+). Its pathway is nitrogen metabolism; urea degradation; CO(2) and NH(3) from urea (urease route): step 1/1. The protein is Urease subunit alpha of Rhizobium rhizogenes (strain K84 / ATCC BAA-868) (Agrobacterium radiobacter).